A 292-amino-acid chain; its full sequence is Elongation factor Ts (292 aa).

Positions 80–83 (TDFV) are involved in Mg(2+) ion dislocation from EF-Tu.

This sequence belongs to the EF-Ts family.

The protein resides in the cytoplasm. In terms of biological role, associates with the EF-Tu.GDP complex and induces the exchange of GDP to GTP. It remains bound to the aminoacyl-tRNA.EF-Tu.GTP complex up to the GTP hydrolysis stage on the ribosome. The protein is Elongation factor Ts of Tolumonas auensis (strain DSM 9187 / NBRC 110442 / TA 4).